The primary structure comprises 99 residues: UPF0751 protein BAMEG_A0107 (99 aa).

This sequence belongs to the UPF0751 family.

The polypeptide is UPF0751 protein BAMEG_A0107 (Bacillus anthracis (strain CDC 684 / NRRL 3495)).